The following is a 908-amino-acid chain: NADH-quinone oxidoreductase subunit G (908 aa).

The region spanning 2-83 (ATIHVDGKEY…GTFISIDDEE (82 aa)) is the 2Fe-2S ferredoxin-type domain. Positions 34, 45, 48, and 67 each coordinate [2Fe-2S] cluster. Residues 83 to 122 (EAKQFRESVVEWLMTNHPHDCPVCEEGGNCHLQDMTVMTG) enclose the 4Fe-4S His(Cys)3-ligated-type domain. Residues H99, C103, C106, C112, C151, C154, C157, C201, C228, C231, C235, and C263 each coordinate [4Fe-4S] cluster. One can recognise a 4Fe-4S Mo/W bis-MGD-type domain in the interval 221-277 (MQFAPSICQQCSIGCNISPGERYGELRRIENRYNGTVNHYFLCDRGRFGYGYVNLKD).

This sequence belongs to the complex I 75 kDa subunit family. In terms of assembly, composed of 13 different subunits. Subunits NuoCD, E, F, and G constitute the peripheral sector of the complex. Requires [2Fe-2S] cluster as cofactor. It depends on [4Fe-4S] cluster as a cofactor.

The enzyme catalyses a quinone + NADH + 5 H(+)(in) = a quinol + NAD(+) + 4 H(+)(out). Its function is as follows. NDH-1 shuttles electrons from NADH, via FMN and iron-sulfur (Fe-S) centers, to quinones in the respiratory chain. The immediate electron acceptor for the enzyme in this species is believed to be ubiquinone. Couples the redox reaction to proton translocation (for every two electrons transferred, four hydrogen ions are translocated across the cytoplasmic membrane), and thus conserves the redox energy in a proton gradient. The protein is NADH-quinone oxidoreductase subunit G (nuoG) of Shigella flexneri.